We begin with the raw amino-acid sequence, 311 residues long: HTH-type transcriptional regulator PcaQ (311 aa).

Residues 6 to 63 (IKFRHLQTFVEVARQKSVIRAAEILHVSQPAVTKTIRELEDVLGVSLLEREGRGIRIS) enclose the HTH lysR-type domain. The H-T-H motif DNA-binding region spans 23 to 42 (VIRAAEILHVSQPAVTKTIR).

Belongs to the LysR transcriptional regulatory family.

Its function is as follows. Activates transcription of the pcaDCHGB operon for the catabolism of the phenolic compound protocatechuate. This Agrobacterium fabrum (strain C58 / ATCC 33970) (Agrobacterium tumefaciens (strain C58)) protein is HTH-type transcriptional regulator PcaQ (pcaQ).